A 258-amino-acid polypeptide reads, in one-letter code: Tryptophan synthase alpha chain (258 aa).

Catalysis depends on proton acceptor residues E52 and D63.

It belongs to the TrpA family. In terms of assembly, tetramer of two alpha and two beta chains.

It catalyses the reaction (1S,2R)-1-C-(indol-3-yl)glycerol 3-phosphate + L-serine = D-glyceraldehyde 3-phosphate + L-tryptophan + H2O. The protein operates within amino-acid biosynthesis; L-tryptophan biosynthesis; L-tryptophan from chorismate: step 5/5. In terms of biological role, the alpha subunit is responsible for the aldol cleavage of indoleglycerol phosphate to indole and glyceraldehyde 3-phosphate. The protein is Tryptophan synthase alpha chain of Streptococcus pneumoniae (strain ATCC 700669 / Spain 23F-1).